The sequence spans 392 residues: Succinate--CoA ligase [ADP-forming] subunit beta (392 aa).

An ATP-grasp domain is found at 9-236; sequence KELFAAHGVP…PSAADPLEAK (228 aa). Residues Lys45, 52–54, Val94, and Glu99 contribute to the ATP site; that span reads GRG. 2 residues coordinate Mg(2+): Asn191 and Asp205. Substrate contacts are provided by residues Asn256 and 318–320; that span reads GIT.

It belongs to the succinate/malate CoA ligase beta subunit family. As to quaternary structure, heterotetramer of two alpha and two beta subunits. Mg(2+) serves as cofactor.

The enzyme catalyses succinate + ATP + CoA = succinyl-CoA + ADP + phosphate. It catalyses the reaction GTP + succinate + CoA = succinyl-CoA + GDP + phosphate. It functions in the pathway carbohydrate metabolism; tricarboxylic acid cycle; succinate from succinyl-CoA (ligase route): step 1/1. Functionally, succinyl-CoA synthetase functions in the citric acid cycle (TCA), coupling the hydrolysis of succinyl-CoA to the synthesis of either ATP or GTP and thus represents the only step of substrate-level phosphorylation in the TCA. The beta subunit provides nucleotide specificity of the enzyme and binds the substrate succinate, while the binding sites for coenzyme A and phosphate are found in the alpha subunit. This is Succinate--CoA ligase [ADP-forming] subunit beta from Acidothermus cellulolyticus (strain ATCC 43068 / DSM 8971 / 11B).